The sequence spans 149 residues: Transcriptional repressor NrdR (149 aa).

A zinc finger spans residues 3–34 (CPFCSEQETKVIDSRLVAEGQQVRRRRECMVC). Residues 49–139 (PRVIKRDGSR…VYRSFEDIRE (91 aa)) form the ATP-cone domain.

It belongs to the NrdR family. Zn(2+) is required as a cofactor.

Negatively regulates transcription of bacterial ribonucleotide reductase nrd genes and operons by binding to NrdR-boxes. The chain is Transcriptional repressor NrdR from Alteromonas mediterranea (strain DSM 17117 / CIP 110805 / LMG 28347 / Deep ecotype).